A 313-amino-acid polypeptide reads, in one-letter code: tRNA-cytidine(32) 2-sulfurtransferase (313 aa).

The PP-loop motif signature appears at 54 to 59 (SGGKDS). [4Fe-4S] cluster contacts are provided by Cys129, Cys132, and Cys220.

This sequence belongs to the TtcA family. In terms of assembly, homodimer. Requires Mg(2+) as cofactor. It depends on [4Fe-4S] cluster as a cofactor.

The protein resides in the cytoplasm. It catalyses the reaction cytidine(32) in tRNA + S-sulfanyl-L-cysteinyl-[cysteine desulfurase] + AH2 + ATP = 2-thiocytidine(32) in tRNA + L-cysteinyl-[cysteine desulfurase] + A + AMP + diphosphate + H(+). It participates in tRNA modification. Functionally, catalyzes the ATP-dependent 2-thiolation of cytidine in position 32 of tRNA, to form 2-thiocytidine (s(2)C32). The sulfur atoms are provided by the cysteine/cysteine desulfurase (IscS) system. The polypeptide is tRNA-cytidine(32) 2-sulfurtransferase (Methylibium petroleiphilum (strain ATCC BAA-1232 / LMG 22953 / PM1)).